We begin with the raw amino-acid sequence, 246 residues long: MTTHNFEHPLNEKTRIYLRVESLLRQAHTAASFSEPHQHQLFFRSIFDLIEIFEQIQLKSELAKDIEKQRLLYRSWLNVEGVDQATLRSLLDEADRTHAALMQAPRFGQSLKEDRFLSSIRQRFSLPGGSCCFDLPALHYWLNLPIERKIEDARQWLDSLKPLSDALNLWLKLAREAGHFRSQTALNGFFQSDAEEANILRLHIPMEYGVYPMISGHKNRFAIKFINFETGQACSQDVHFELAVCS.

It belongs to the ZapD family. In terms of assembly, interacts with FtsZ.

The protein resides in the cytoplasm. Functionally, cell division factor that enhances FtsZ-ring assembly. Directly interacts with FtsZ and promotes bundling of FtsZ protofilaments, with a reduction in FtsZ GTPase activity. The chain is Cell division protein ZapD from Vibrio vulnificus (strain CMCP6).